The primary structure comprises 521 residues: SET and MYND domain-containing protein DDB_G0292140 (521 aa).

The tract at residues 1–101 (MDGVIESPSN…KIKKSKKSIK (101 aa)) is disordered. The segment covering 12 to 55 (TIKISPSTSDSSTTTPIITTPPTQSTATVTTKAAATTTTTEAST) has biased composition (low complexity). Positions 56-65 (TPPPPQPTPT) are enriched in pro residues. Residues 66–90 (PTQSTATVTKEVETTTETIPPIVTK) are compositionally biased toward low complexity. The segment covering 91 to 101 (GKIKKSKKSIK) has biased composition (basic residues). The 285-residue stretch at 122 to 406 (WPIHVYSHPI…EGDELTISYI (285 aa)) folds into the SET domain. 8 residues coordinate Zn(2+): Cys167, Cys170, Cys188, Cys191, Cys197, Cys201, His209, and Cys213. Residues 167 to 213 (CQHCFLEVPLNQQILPTDFYMCEGCQRVGYCSANCRCIDYSQHRFEC) form an MYND-type zinc finger. Residues 442–521 (QTGTLEKDDD…QDHQNNDKSN (80 aa)) are disordered. A compositionally biased stretch (acidic residues) spans 448-469 (KDDDDNDDEKEKMDEDDDEKDD). Basic and acidic residues predominate over residues 470–485 (DINNKNDKKSKYKSDG). Acidic residues predominate over residues 486-495 (STDDEEDEDN). Positions 497 to 514 (NNKNNNKNKNNNSNNQDH) are enriched in low complexity.

This sequence belongs to the class V-like SAM-binding methyltransferase superfamily.

Probable methyltransferase. The sequence is that of SET and MYND domain-containing protein DDB_G0292140 from Dictyostelium discoideum (Social amoeba).